Reading from the N-terminus, the 707-residue chain is Transcription factor 12 (707 aa).

The segment at 25–109 (AMFSPPVNSG…TPFMNSNLIG (85 aa)) is disordered. 2 stretches are compositionally biased toward polar residues: residues 30–48 (PVNS…QFSG) and 56–76 (GTTS…SRGF). Phosphoserine is present on residues Ser47, Ser67, and Ser79. The segment covering 81-93 (HYSDHLNDSRLGT) has biased composition (basic and acidic residues). Ser98 is subject to Phosphoserine. Residue Lys110 forms a Glycyl lysine isopeptide (Lys-Gly) (interchain with G-Cter in SUMO2) linkage. Residues Ser116 and Ser124 each carry the phosphoserine modification. Residues 119 to 140 (LYSRDSGLSGCQSSLLRQDLGL) form a leucine-zipper region. Disordered stretches follow at residues 140–222 (LGSP…SMFA) and 249–313 (FGGI…ASHT). Over residues 144–163 (AQLSSSGKPGTPYYSFSATS) the composition is skewed to polar residues. Lys181 is covalently cross-linked (Glycyl lysine isopeptide (Lys-Gly) (interchain with G-Cter in SUMO2)). The span at 256 to 269 (STSHMSQSSSYGSL) shows a compositional bias: low complexity. Polar residues predominate over residues 282–306 (VSPTDINTSLPPMSSFHRGSTSSSP). Position 313 is a phosphothreonine (Thr313). The residue at position 333 (Ser333) is a Phosphoserine. 2 disordered regions span residues 349 to 393 (PDHT…YENS) and 521 to 605 (HKTP…ERRM). Low complexity predominate over residues 352–363 (TSSSFPSNPSTP). Composition is skewed to polar residues over residues 364-377 (VGSP…TSQW) and 384-393 (APSSPSYENS). Basic and acidic residues-rich tracts occupy residues 543–555 (IKTE…ENLH) and 561–576 (DDMK…DIKV). Lys544 participates in a covalent cross-link: Glycyl lysine isopeptide (Lys-Gly) (interchain with G-Cter in SUMO2). Ser565 carries the post-translational modification Phosphoserine. Lys575 is covalently cross-linked (Glycyl lysine isopeptide (Lys-Gly) (interchain with G-Cter in SUMO2)). Thr582 carries the post-translational modification Phosphothreonine. A phosphoserine mark is found at Ser583 and Ser584. Residues 593-605 (PEQKIEREKERRM) are compositionally biased toward basic and acidic residues. The bHLH domain maps to 602–655 (ERRMANNARERLRVRDINEAFKELGRMCQLHLKSEKPQTKLLILHQAVAVILSL). Residues Lys634 and Lys678 each participate in a glycyl lysine isopeptide (Lys-Gly) (interchain with G-Cter in SUMO2) cross-link. Residues 657-680 (QQVRERNLNPKAACLKRREEEKVS) are class A specific domain. A disordered region spans residues 675-707 (EEEKVSAASAEPPTTLPGTHPGLSETTNPMGHL). The segment covering 686–697 (PPTTLPGTHPGL) has biased composition (low complexity). Residues 698-707 (SETTNPMGHL) show a composition bias toward polar residues.

In terms of assembly, efficient DNA binding requires dimerization with another bHLH protein. Forms homo- or heterooligomers with myogenin, E12 and ITF2 proteins. Interacts with PTF1. Interacts with RUNX1T1. Interacts with NEUROD2. Interacts with BHLHA9. As to expression, isoform gamma is highly expressed in lung, kidney, spleen, and is expressed at reduced levels in heart, muscle, liver, pituitary, brain and the trigeminal ganglion. The expression of isoform alpha predominates over isoform gamma in the pituitary and the brain.

It is found in the nucleus. In terms of biological role, transcriptional regulator. Involved in the initiation of neuronal differentiation. Activates transcription by binding to the E box (5'-CANNTG-3'). May be involved in the functional network that regulates the development of the GnRH axis. The chain is Transcription factor 12 (Tcf12) from Rattus norvegicus (Rat).